The chain runs to 283 residues: uncharacterized protein (283 aa).

3 helical membrane-spanning segments follow: residues Leu-24–Ile-44, Thr-64–Ala-84, and Val-96–Ser-116.

This sequence belongs to the MscS (TC 1.A.23) family.

The protein resides in the cell membrane. This is an uncharacterized protein from Buchnera aphidicola subsp. Schizaphis graminum (strain Sg).